The sequence spans 257 residues: UPF0246 protein BPP3440 (257 aa).

Belongs to the UPF0246 family.

This is UPF0246 protein BPP3440 from Bordetella parapertussis (strain 12822 / ATCC BAA-587 / NCTC 13253).